The sequence spans 417 residues: Serine hydroxymethyltransferase 1 (417 aa).

Residues leucine 121 and 125 to 127 each bind (6S)-5,6,7,8-tetrahydrofolate; that span reads GHL. N6-(pyridoxal phosphate)lysine is present on lysine 229. Residue 354-356 participates in (6S)-5,6,7,8-tetrahydrofolate binding; the sequence is SPF.

This sequence belongs to the SHMT family. As to quaternary structure, homodimer. Pyridoxal 5'-phosphate serves as cofactor.

It is found in the cytoplasm. It carries out the reaction (6R)-5,10-methylene-5,6,7,8-tetrahydrofolate + glycine + H2O = (6S)-5,6,7,8-tetrahydrofolate + L-serine. It functions in the pathway one-carbon metabolism; tetrahydrofolate interconversion. The protein operates within amino-acid biosynthesis; glycine biosynthesis; glycine from L-serine: step 1/1. Its function is as follows. Catalyzes the reversible interconversion of serine and glycine with tetrahydrofolate (THF) serving as the one-carbon carrier. This reaction serves as the major source of one-carbon groups required for the biosynthesis of purines, thymidylate, methionine, and other important biomolecules. Also exhibits THF-independent aldolase activity toward beta-hydroxyamino acids, producing glycine and aldehydes, via a retro-aldol mechanism. The polypeptide is Serine hydroxymethyltransferase 1 (Pseudomonas savastanoi pv. phaseolicola (strain 1448A / Race 6) (Pseudomonas syringae pv. phaseolicola (strain 1448A / Race 6))).